Reading from the N-terminus, the 292-residue chain is 2-(5''-triphosphoribosyl)-3'-dephosphocoenzyme-A synthase (292 aa).

This sequence belongs to the CitG/MdcB family.

The enzyme catalyses 3'-dephospho-CoA + ATP = 2'-(5''-triphospho-alpha-D-ribosyl)-3'-dephospho-CoA + adenine. Functionally, catalyzes the formation of 2-(5''-triphosphoribosyl)-3'-dephosphocoenzyme-A, the precursor of the prosthetic group of the holo-acyl carrier protein (gamma chain) of citrate lyase, from ATP and dephospho-CoA. The polypeptide is 2-(5''-triphosphoribosyl)-3'-dephosphocoenzyme-A synthase (Escherichia coli (strain ATCC 8739 / DSM 1576 / NBRC 3972 / NCIMB 8545 / WDCM 00012 / Crooks)).